The sequence spans 878 residues: Interleukin-3 receptor class 2 subunit beta (878 aa).

Positions 1 to 22 (MDQQMALTWGLCYMALVALCWG) are cleaved as a signal peptide. The Extracellular segment spans residues 23-440 (HEVTEEEETV…SNEYTWTTDW (418 aa)). Residues C39 and C49 are joined by a disulfide bond. A glycan (N-linked (GlcNAc...) asparagine) is linked at N62. An intrachain disulfide couples C78 to C95. The Fibronectin type-III 1 domain occupies 139-244 (PPKDIHISPS…PEVHWDSQPG (106 aa)). The tract at residues 223 to 244 (GSSLSGRPSRWSPEVHWDSQPG) is disordered. 2 disulfides stabilise this stretch: C254–C264 and C293–C310. The 96-residue stretch at 343–438 (QMEPPILNQT…EWSNEYTWTT (96 aa)) folds into the Fibronectin type-III 2 domain. Residue N350 is glycosylated (N-linked (GlcNAc...) asparagine). A WSXWS motif motif is present at residues 427 to 431 (WSEWS). Residues 441–462 (VMPTLWIVLILVFLIFTLLLAL) traverse the membrane as a helical segment. The Cytoplasmic segment spans residues 463 to 878 (HFGRVYGYRT…AIQFFKSLKY (416 aa)). A Box 1 motif motif is present at residues 476 to 484 (WKEKIPNPS). 2 disordered regions span residues 539-620 (LTIE…GGSL) and 660-709 (SSLE…MASD). The segment covering 554 to 570 (PDTTPAASSESTEQLPN) has biased composition (polar residues). A compositionally biased stretch (basic and acidic residues) spans 671–689 (EPKENPPVELSVEKQEARD). S752 and S754 each carry phosphoserine. Y765 carries the phosphotyrosine modification. 2 disordered regions span residues 771–810 (SVSQ…PHPE) and 829–849 (PGSL…ETED).

The protein belongs to the type I cytokine receptor family. Type 4 subfamily. In terms of assembly, heterodimer of an alpha and a beta subunit.

The protein resides in the membrane. In mouse, there are two classes of high-affinity IL3 receptors. One contains this IL3-specific beta subunit and the other contains the beta subunit also shared by high-affinity IL5 and GM-CSF receptors. The chain is Interleukin-3 receptor class 2 subunit beta (Csf2rb2) from Mus musculus (Mouse).